The sequence spans 73 residues: UPF0346 protein SSP1318 (73 aa).

This sequence belongs to the UPF0346 family.

The chain is UPF0346 protein SSP1318 from Staphylococcus saprophyticus subsp. saprophyticus (strain ATCC 15305 / DSM 20229 / NCIMB 8711 / NCTC 7292 / S-41).